A 391-amino-acid chain; its full sequence is DNA/RNA-binding protein KIN17 (391 aa).

The C2H2-type zinc-finger motif lies at 28-50; the sequence is CQMCQKQCRDENGFKCHCMSESH. The interval 51-160 is winged helix-turn-helix (wHTH); sequence QRQLLLASEN…RQLELEKKKK (110 aa). Lys-135 is modified (N6,N6,N6-trimethyllysine; by METTL22; alternate). Lys-135 carries the N6-methyllysine; alternate modification. Coiled coils occupy residues 147–180 and 252–275; these read ETIRRQLELEKKKKQDLDDEEKTAKFIEEQVRRG and AKKKKSALDEIMELEEEKKRTART. The interval 206 to 258 is disordered; the sequence is NLNKGAGGSAGATTSKSSSLGPSALKLLGSAASGKRKESSQSSAQPAKKKKSA. The C-terminal subdomain A stretch occupies residues 282–332; it reads GIVVKIITKKLGEKYHKKKGVVKEVIDRYTAVVKMTDSGDRLKLDQTHLET. The interval 338-389 is C-terminal subdomain B; that stretch reads GKRVLVLNGGYRGNEGTLESINEKAFSATIVIETGPLKGRRVEGIQYEDISK.

Belongs to the KIN17 family. In terms of assembly, associated with DNA polymerase alpha, RFC1 and cyclin A, in multiprotein DNA replication complexes. Also associates with replication origins at the G1/S phase boundary and throughout the S phase in vivo. In terms of tissue distribution, highly expressed in transformed mouse AtT20 neuroendocrine cells. Expressed at a lower level in testis, kidney, skeletal muscle, liver, lung, spleen, brain and heart and kidney. In testis, expressed at much higher levels in proliferating cells than in differentiating cells. Not detected in embryo.

It localises to the nucleus. Its subcellular location is the cytoplasm. Functionally, involved in DNA replication and the cellular response to DNA damage. May participate in DNA replication factories and create a bridge between DNA replication and repair mediated by high molecular weight complexes. May play a role in illegitimate recombination and regulation of gene expression. May participate in mRNA processing. Binds, in vitro, to double-stranded DNA. Also shown to bind preferentially to curved DNA in vitro and in vivo. Binds via its C-terminal domain to RNA in vitro. The chain is DNA/RNA-binding protein KIN17 from Mus musculus (Mouse).